The following is a 336-amino-acid chain: Telomere-binding protein cav (336 aa).

A required for binding to Su(var)205 region spans residues 107-328 (RKKMVQPYPE…TITFQNSESE (222 aa)). Disordered regions lie at residues 137–158 (RLDR…SPAR) and 199–218 (SSDL…SEFQ). Short sequence motifs (su(var)205-binding Pro-containing repeat) lie at residues 225–231 (PETAINE) and 289–295 (PETEMNE). A compositionally biased stretch (polar residues) spans 308 to 327 (MSIGPSIDSEGTITFQNSES). A disordered region spans residues 308–336 (MSIGPSIDSEGTITFQNSESEPIDVDSIA).

As to quaternary structure, interacts (via C-terminus) with Su(var)205 dimer (via hinge and chromoshadow domain) and with moi to form the terminin, telomere-capping, complex. Interacts with HP6, which is also part of the terminin complex.

The protein resides in the nucleus. The protein localises to the chromosome. Its subcellular location is the telomere. Binds to chromosome ends in a sequence-dependent manner and is required for telomere capping. The chain is Telomere-binding protein cav from Drosophila sechellia (Fruit fly).